A 394-amino-acid chain; its full sequence is Outer membrane protein S1 (394 aa).

Positions 1–21 (MNRKVLALLVPALLVAGAANA) are cleaved as a signal peptide. Residues 222–242 (SSSDRSDNQVARGYGDGMNER) form a disordered region.

This sequence belongs to the Gram-negative porin family. As to quaternary structure, homotrimer.

It localises to the cell outer membrane. Its function is as follows. Forms pores that allow passive diffusion of small molecules across the outer membrane. The chain is Outer membrane protein S1 (ompS1) from Salmonella typhi.